The primary structure comprises 363 residues: Chorismate synthase (363 aa).

NADP(+)-binding residues include Arg47 and Arg53. FMN contacts are provided by residues 124–126 (RSS), Gly286, 301–305 (KPTAT), and Arg327.

The protein belongs to the chorismate synthase family. As to quaternary structure, homotetramer. FMNH2 serves as cofactor.

The catalysed reaction is 5-O-(1-carboxyvinyl)-3-phosphoshikimate = chorismate + phosphate. The protein operates within metabolic intermediate biosynthesis; chorismate biosynthesis; chorismate from D-erythrose 4-phosphate and phosphoenolpyruvate: step 7/7. Catalyzes the anti-1,4-elimination of the C-3 phosphate and the C-6 proR hydrogen from 5-enolpyruvylshikimate-3-phosphate (EPSP) to yield chorismate, which is the branch point compound that serves as the starting substrate for the three terminal pathways of aromatic amino acid biosynthesis. This reaction introduces a second double bond into the aromatic ring system. The sequence is that of Chorismate synthase from Thermosynechococcus vestitus (strain NIES-2133 / IAM M-273 / BP-1).